A 281-amino-acid chain; its full sequence is NADH-quinone oxidoreductase subunit B (281 aa).

4 residues coordinate [4Fe-4S] cluster: Cys-37, Cys-38, Cys-103, and Cys-132. The disordered stretch occupies residues 242–281 (DAKPLDESRAHGPGPTTADIADAADTADSDAAPGATHDTP). Residues 257–281 (TTADIADAADTADSDAAPGATHDTP) show a composition bias toward low complexity.

It belongs to the complex I 20 kDa subunit family. As to quaternary structure, NDH-1 is composed of 14 different subunits. Subunits NuoB, C, D, E, F, and G constitute the peripheral sector of the complex. Requires [4Fe-4S] cluster as cofactor.

Its subcellular location is the cell membrane. It carries out the reaction a quinone + NADH + 5 H(+)(in) = a quinol + NAD(+) + 4 H(+)(out). Its function is as follows. NDH-1 shuttles electrons from NADH, via FMN and iron-sulfur (Fe-S) centers, to quinones in the respiratory chain. The immediate electron acceptor for the enzyme in this species is believed to be a menaquinone. Couples the redox reaction to proton translocation (for every two electrons transferred, four hydrogen ions are translocated across the cytoplasmic membrane), and thus conserves the redox energy in a proton gradient. The chain is NADH-quinone oxidoreductase subunit B from Frankia alni (strain DSM 45986 / CECT 9034 / ACN14a).